The following is a 1372-amino-acid chain: DNA-directed RNA polymerase subunit beta (1372 aa).

It belongs to the RNA polymerase beta chain family. As to quaternary structure, the RNAP catalytic core consists of 2 alpha, 1 beta, 1 beta' and 1 omega subunit. When a sigma factor is associated with the core the holoenzyme is formed, which can initiate transcription.

It catalyses the reaction RNA(n) + a ribonucleoside 5'-triphosphate = RNA(n+1) + diphosphate. In terms of biological role, DNA-dependent RNA polymerase catalyzes the transcription of DNA into RNA using the four ribonucleoside triphosphates as substrates. The protein is DNA-directed RNA polymerase subunit beta of Bradyrhizobium sp. (strain BTAi1 / ATCC BAA-1182).